The sequence spans 423 residues: Guanine nucleotide-binding protein subunit beta (423 aa).

WD repeat units lie at residues 90–120 (GHNN…LIWD), 132–162 (LDSQ…TIYR), 179–208 (GHTC…ALWD), 220–256 (DHLG…YIWD), 268–298 (VNDS…NMYD), 348–377 (DNQG…VVWD), and 389–419 (GHGG…KIWS).

Belongs to the WD repeat G protein beta family. In terms of assembly, g proteins are composed of 3 units, alpha, beta and gamma. The beta-gamma subunit complex (STE4-STE18 complex) interacts with PLP1 and PLP2. Interacts with SYG1.

Functionally, implicated in the a- and alpha-factor response pathway. The beta and gamma chains of the putative yeast mating response pathway G protein play a positive role in initiation of the mating response. The beta and gamma chains are required for the GTPase activity, for replacement of GDP by GTP, and for G protein-effector interaction. The protein is Guanine nucleotide-binding protein subunit beta (STE4) of Saccharomyces cerevisiae (strain ATCC 204508 / S288c) (Baker's yeast).